A 1150-amino-acid chain; its full sequence is MSQRDAKKDGLLYTTNGVSPTPPKRIPVPSRQNKIEENSTTKNFPHSRHTSTVAGTEGGSSLSRRHTSAESRKALPNQQQLAQSGLLNKEEQQSLKRSDTSVFPKAVRKVSSSKICASCGQVISGQYVRALGNIYHLECFRCHDCNSLVASKFFPIDDPTLNKQVPLCETDYFRRLDLLCASCGMALRGYYITALNKKFHIEHFTCSLCYTVFGPNDSYYEYEGKVYCHYHYSTLFAARCCGCDGPILRQFVEVYRNGVSQNWHVPCHMIYKFWNVKLCQKTSIETSKKKDSELSQSQLRKREKHLEQKIFHIWHALSYFEEYTASCISDMLLLVSNGEFTKSVICAQKFIRYIEILFKGIDSLETILSSFHAKSMPYVREAKLLCKKLVSIFALLAKCHNSDIRDVAIVQDFLSLFTGLAHYLKLLIRISLTGGLRLEQDHACKHALPQFLQTVEEARFVDQEGYDSSSFDMPLNLANASSDLCYVCHSALEEDCVLLGEIRCHIGCLSCTKCKYNNRENYDWARWNNQTKQIECYLCYTESSNVSNDEPHPSFEYVSRLSQYIYLLRIALVRLYTILMENNDSSQRKPLSVDPKQENVSSTVETAKQAETTASSDSFRKYANTLNDLRHLKSSRNRKATSNETQSSSNSTETSKLSKNVSESGKDKSPHWHSHGGSITGKSIVEQASSPLERRMDAFDENRAFTLDDIPKVISEQRNREHRPNAFRHMPSYTDPSYRKNSGAIYDKNDGTQKGLTPKSEDAPIRYLSDLSNLELLFTKHVAVLILHPLVRDYYSLDELMEMSDLRKGGFWEKFGKAFKGKDAEKKNVKKKGTFGVPLEILVERNNAQSTVGTGVGVKHIPAFIGNTLAAMKRKDMSVVGVFRKNGNIRRLKELSDMLDVSPDSIDYEQETPIQLAALLKKFLRELPDPLLTFKLFGLFITSSKLESEEERMRVLHLTICLLPKGHRDTMEVIFGFLYWVASFSHIDDEVGSKMDIHNLATVITPNILYSKSNDPVDESFLAIEAVHLLIENFEKFCEVPREISLLLDDPTLFYNNAAWTSKELYKRCEEIISQMSLDERNTPKHTASTKRKRQPIRRVTTNLTSDVPSGSEVADTNSLSSTTKDEASPNSDAQPKPQVKPQHAVIRDS.

Residues 1-10 (MSQRDAKKDG) are compositionally biased toward basic and acidic residues. The disordered stretch occupies residues 1–78 (MSQRDAKKDG…AESRKALPNQ (78 aa)). Polar residues predominate over residues 40–62 (TTKNFPHSRHTSTVAGTEGGSSL). LIM zinc-binding domains lie at 114 to 177 (KICA…RRLD), 178 to 238 (LLCA…LFAA), and 483 to 546 (DLCY…SSNV). Residues 586–683 (SQRKPLSVDP…SHGGSITGKS (98 aa)) are disordered. Residues 598 to 617 (ENVSSTVETAKQAETTASSD) show a composition bias toward polar residues. Residues 642-655 (SNETQSSSNSTETS) show a composition bias toward low complexity. S690 is modified (phosphoserine). The segment at 726 to 759 (AFRHMPSYTDPSYRKNSGAIYDKNDGTQKGLTPK) is disordered. In terms of domain architecture, Rho-GAP spans 837–1038 (VPLEILVERN…LLIENFEKFC (202 aa)). Disordered regions lie at residues 1078-1097 (LDER…RQPI) and 1104-1150 (LTSD…IRDS). Over residues 1088–1097 (ASTKRKRQPI) the composition is skewed to basic residues. The segment covering 1104-1134 (LTSDVPSGSEVADTNSLSSTTKDEASPNSDA) has biased composition (polar residues).

Its subcellular location is the cell tip. It is found in the nucleus. GTPase-activating protein for Rho1. Involved in the F-actin patch localization, cell morphogenesis, regulation of septation, and cell wall synthesis. This is Rho-type GTPase-activating protein 1 (rga1) from Schizosaccharomyces pombe (strain 972 / ATCC 24843) (Fission yeast).